The primary structure comprises 122 residues: Ribonuclease P protein component (122 aa).

It belongs to the RnpA family. As to quaternary structure, consists of a catalytic RNA component (M1 or rnpB) and a protein subunit.

The catalysed reaction is Endonucleolytic cleavage of RNA, removing 5'-extranucleotides from tRNA precursor.. In terms of biological role, RNaseP catalyzes the removal of the 5'-leader sequence from pre-tRNA to produce the mature 5'-terminus. It can also cleave other RNA substrates such as 4.5S RNA. The protein component plays an auxiliary but essential role in vivo by binding to the 5'-leader sequence and broadening the substrate specificity of the ribozyme. The protein is Ribonuclease P protein component of Lactobacillus gasseri (strain ATCC 33323 / DSM 20243 / BCRC 14619 / CIP 102991 / JCM 1131 / KCTC 3163 / NCIMB 11718 / NCTC 13722 / AM63).